Reading from the N-terminus, the 305-residue chain is Serine/threonine-protein kinase 16 (305 aa).

Glycine 2 carries N-myristoyl glycine lipidation. Residues cysteine 6 and cysteine 8 are each lipidated (S-palmitoyl cysteine). The 274-residue stretch at 20–293 (YLFIQKLGEG…PLLLSQLEAL (274 aa)) folds into the Protein kinase domain. Residues 26 to 34 (LGEGGFSYV) and lysine 49 each bind ATP. Residue aspartate 148 is the Proton acceptor of the active site. Residues 166–202 (DLGSMNQACIHVEGSRQALTLQDWAAQRCTISYRAPE) form an activation loop region. Threonine 185 carries the phosphothreonine; by autocatalysis modification. Serine 197 is subject to Phosphoserine; by autocatalysis. The residue at position 198 (tyrosine 198) is a Phosphotyrosine; by autocatalysis.

Belongs to the protein kinase superfamily. Ser/Thr protein kinase family. Monomer. Interacts with DRG1 (via its N-terminal); the interaction phosphorylates DRG1. Mainly autophosphorylated on serine/threonine residues. Also autophosphorylated on Tyr-198. In terms of processing, it is uncertain whether palmitoylation is on Cys-6 and/or Cys-8. In terms of tissue distribution, ubiquitously expressed at very low levels.

The protein resides in the cytoplasm. Its subcellular location is the perinuclear region. It localises to the membrane. It carries out the reaction L-seryl-[protein] + ATP = O-phospho-L-seryl-[protein] + ADP + H(+). The catalysed reaction is L-threonyl-[protein] + ATP = O-phospho-L-threonyl-[protein] + ADP + H(+). The enzyme catalyses L-tyrosyl-[protein] + ATP = O-phospho-L-tyrosyl-[protein] + ADP + H(+). In terms of biological role, membrane-associated protein kinase that phosphorylates on serine and threonine residues. In vitro substrates include DRG1, ENO1 and EIF4EBP1. Also autophosphorylates. May be involved in secretory vesicle trafficking or intracellular signaling. May have a role in regulating stromal-epithelial interactions that occur during ductal morphogenesis in the mammary gland. May be involved in TGF-beta signaling. Able to autophosphorylate on Tyr residue; it is however unclear whether it has tyrosine-protein kinase toward other proteins. This chain is Serine/threonine-protein kinase 16 (STK16), found in Homo sapiens (Human).